The chain runs to 615 residues: Protein translocase subunit SecD (615 aa).

6 helical membrane-spanning segments follow: residues 10–30, 452–472, 477–497, 504–524, 548–570, and 585–605; these read YVML…NLFG, QGLE…IIFY, LIAT…MSLL, MPGI…NVLI, GAFS…LYAV, and GVAT…NLLY.

The protein belongs to the SecD/SecF family. SecD subfamily. In terms of assembly, forms a complex with SecF. Part of the essential Sec protein translocation apparatus which comprises SecA, SecYEG and auxiliary proteins SecDF-YajC and YidC.

Its subcellular location is the cell inner membrane. Part of the Sec protein translocase complex. Interacts with the SecYEG preprotein conducting channel. SecDF uses the proton motive force (PMF) to complete protein translocation after the ATP-dependent function of SecA. This is Protein translocase subunit SecD from Shigella flexneri.